Here is a 508-residue protein sequence, read N- to C-terminus: 3-octaprenyl-4-hydroxybenzoate carboxy-lyase (508 aa).

Asparagine 172 contacts Mn(2+). Prenylated FMN contacts are provided by residues 175-177 (IYR), 189-191 (RWL), and 194-195 (RG). Residue glutamate 238 coordinates Mn(2+). Catalysis depends on aspartate 287, which acts as the Proton donor. Positions 483–508 (GEYGIATPPPPPRHSPPSDERGHDDV) are disordered. Positions 498–508 (PPSDERGHDDV) are enriched in basic and acidic residues.

Belongs to the UbiD family. In terms of assembly, homohexamer. It depends on prenylated FMN as a cofactor. Mn(2+) serves as cofactor.

Its subcellular location is the cell membrane. It carries out the reaction a 4-hydroxy-3-(all-trans-polyprenyl)benzoate + H(+) = a 2-(all-trans-polyprenyl)phenol + CO2. The protein operates within cofactor biosynthesis; ubiquinone biosynthesis. In terms of biological role, catalyzes the decarboxylation of 3-octaprenyl-4-hydroxy benzoate to 2-octaprenylphenol, an intermediate step in ubiquinone biosynthesis. This chain is 3-octaprenyl-4-hydroxybenzoate carboxy-lyase, found in Chromohalobacter salexigens (strain ATCC BAA-138 / DSM 3043 / CIP 106854 / NCIMB 13768 / 1H11).